The chain runs to 283 residues: Zip homologous protein 4 (283 aa).

The segment at 6 to 50 (CFRCYKFPSKQIEFYLTNCMHMFCIECERLCHPPEEEPLKCIQCS) adopts an RING-type zinc-finger fold. 2 disordered regions span residues 149–175 (KKQL…SSRS) and 201–283 (TKAQ…RNSQ). The span at 163–175 (PRSNSLKVASSRS) shows a compositional bias: polar residues. The span at 202 to 216 (KAQAKAEAEAEAPAK) shows a compositional bias: low complexity. A compositionally biased stretch (polar residues) spans 220-235 (SKAQTTKCTSNYQSHP). Over residues 267 to 283 (KKHEAQREKHKEHRNSQ) the composition is skewed to basic and acidic residues.

In terms of assembly, interacts with zhp-3; the interaction is required for their localization along paired chromosomes and stability, and for the formation of chiasma during meiotic recombination. Expressed in the germline.

The protein localises to the chromosome. Recruited co-dependently with zhp-3 to the synaptonemal complex between homologous chromosome pairs to regulate the formation and number of crossover events between homologs during meiotic recombination. In the early stages of pachytene, in complex with zhp-4, recruited by the zhp-1-zhp-2 heterodimer to designated crossover sites along the recombination intermediate to stabilize other pro-crossover factors such as rmh-1, msh-5 and cosa-1. This in turn facilitates crossover and promotes the formation of chiasma in each meiotic nucleus at the late pachytene stage of meiosis. Negatively regulates double strand break formation to promote formation of the crossover intermediate. The polypeptide is Zip homologous protein 4 (Caenorhabditis elegans).